Here is a 1880-residue protein sequence, read N- to C-terminus: MDLRTGYMFPCLTDGQFVEDDTLHSVALGIDSPISLSNGPDGEWARELSIAWAILLFTYNEQEAVEFACLRNQHWFCVDAKMNRDLSWKDIEIHEGGTSDGRQVNTGLCLSQEGATPIPTRLQLVLVGSISGGGLSLEYRPNLLSAEQAANVASTLETIMRALQGRTVSIGSIDVLSERNITDLNRFAVARRALPEGCLDDIITAQAVERGNSIAIDSWDGTLSYQELDTLSTLLAKYLRSLDLSGTYVPLCADKSAWAVVAMLAILKAGAACSPLDPSHPRSRLQSMVQLCDAKAVIATERHASLLQMDGVEVVVVGPDMSSFLQHQISPAEAPGPSHRDVAFLMWTSGSTGAPKGVILEHTALFMSISAYAAANQFSAETRCFQFTSFTFAVSLCDIFGTLSQGGCLCMPSETQRLTDLTGALRELHATFCWLTSTSLADLNPHDLPDLRSVTVGGESLSRELVARWATHLRLTVSYGTTETAGWCLLNTGLSPTGDARTLGRPTIPGVWIAHPDNVNRLVPVGAVGELLVEGPFLAQGYLDDEERTAAHFIPPPSWMTQFRPQEVTRLYRTNDLVRYNSDGSVSFVGRRQAHAKIRGNRISLPEIEAQVRHSCKDAQAVVELVTTKDQVEMLTAFLVVSGQESLSEAPLICPPNDCFRETVTNSLSVLEQSLPSYMVPTVFVPLSHIPLTRTNKADRHVLRKLAEAMSRADLVQLMTKPRPVEQLPLSPLERQIQGLWADLTNIPAESIGPDDNFFHLGGDSVLAIHLVPLARRHGLSLTVQDVFRYPKMKELGAHLEQEASQGSQRSKSQPIASFDPTPWKSVAAQQCGIDELAIEDVYPCTALQEGLMALSAQRTGAYILSMAQNLSPTVDLGRLLEAWQTVVKAVPILRTRIVRLTNEGFHQAVVDESIEWQSVKSEAEFRRMNQLNPLGLGTRLVRFALLLSAADQPSRLLLAMHHSVFDRWSGPLLVRAVEDAYQGQPVMPQYFKDFVSYVSTCPREEVDAFWRHQLSDADPTVFPPTPEPNYLPSPTKSSERIILLPLSRTHVTITTKLRLCWALVLSQHTGNADVVFGAVSTGRSARVEGIESLIGPTLATVPFRVRIDGSAMVSDALQALQDDAATMLPYEQRGLQNIARISRETRAACNFQNLLIVHAPDSRGHSTILKITDDQQLLDLFSYGLTLSCEVLDQDRIQCQAFFDPNMLEHAYVKVLLDQLAHAVRQIHAVPDCKVGEISLLSPQDQQQLQEWNPPIPRTGLTIHETIQRQCLAHPQKEAVCSWDGSITYRALNELSSSLASQILQRCGQPTSFVPLLMERSKWTAVTMLAVMKAGKAFVLLDASFPVERLQSICCQLDATLILSSSKHADVAQRLVSNPLIVDAIIGLPGPSLALPVVHPDATLYAVFTSGSTGRPKAVLISHASYGSGAEAHIPAALITPATRVLQFASYAFDASIIEHLSTFMAGGCVCVLSDPERTSSLAEAVAAQRANFAWLTPSVTRFIDPQDFPTMDRLCLMGESMRRSEIERWSSRVNLMQAYGPAECSVLATLRPSLTTQSDPRNIGCARGCHAWVVDPENHTRLLPIGAVGELIIEGPIVGQGYHGSPEQTQAAFPPVPDWLSDYHDGDLSQVRVYKTGDLVQYSPKLDGSLLFIGRKDRQVKLRGQRLELSEVEYHAYHTLAGTWELVVELINSQHNPALALFLAEKQDSPKPCGVLSMTPAWRSVMSRLRDTLASRLPPYMVPTVWIPITQIPLSSSQKTDRRSLQSLAGDLSAEQYQTYILASSSEATPGLTHSHLKEVPLNENELVLQDLVRQVFTGEDGSLSVASIPMDGLFTDIGGDSLGALALTSLAKQHGFHFTAGDVLGSSLGELASLRHT.

An adenylation 1 region spans residues 205–594; that stretch reads AQAVERGNSI…SVSFVGRRQA (390 aa). Residues 728-804 form the Carrier domain; the sequence is LPLSPLERQI…ELGAHLEQEA (77 aa). Ser765 bears the O-(pantetheine 4'-phosphoryl)serine mark. The interval 840–1250 is condensation; it reads EDVYPCTALQ…LLSPQDQQQL (411 aa). The tract at residues 1269 to 1665 is adenylation 2; that stretch reads QRQCLAHPQK…GRKDRQVKLR (397 aa).

Belongs to the NRP synthetase family.

The enzyme catalyses 7-carboxymellein + L-phenylalanine + ATP = ochratoxin B + ADP + phosphate + H(+). It functions in the pathway mycotoxin biosynthesis. In terms of biological role, nonribosomal peptide synthetase; part of the gene cluster that mediates the biosynthesis of ochratoxin A (OTA), a mycotoxin composed of a chlorinated type I polyketide dihydroisocoumarin moiety linked to L-phenylalanine, and demonstrated to have nephrotoxic, immunotoxic, genotoxic, neurotoxic, and teratogenic properties. OtaB is responsible for the linking of phenylalanine to the dihydroisocoumarin ring. The pathway begins with the highly reducing polyketide synthase otaA that catalyzes the formation of the isocoumarin group during the initial stages of biosynthesis, starting from one acetate and 4 malonate units, to originate the characteristic pentaketide skeleton 7-methylmellein (7-MM) of the OTA molecule. The newly identified cyclase otaY might be involved in the polyketide cyclization reaction during the initial steps of the OTA biosynthesis. 7-MM is then oxidized into 7-carboxymellein (also called ochratoxin beta) by the cytochrome P450 monooxygenase otaC. The NRPS encoded by the otaB gene is involved in the linking of phenylalanine to the dihydroisocoumarin ring. The reaction catalyzed by NRPS results in the production of ochratoxin B (OTB), which is the non-chlorinated analog of OTA and which subsequently serves as the substrate of the halogenase otaD for chlorination activity to form the final molecular structure of OTA, containing a chlorine atom in the C-5 position of the molecule. The chain is Nonribosomal peptide synthetase otaB from Aspergillus niger (strain ATCC MYA-4892 / CBS 513.88 / FGSC A1513).